Reading from the N-terminus, the 649-residue chain is Pesticidal crystal protein Cry3Ca (649 aa).

Over residues 1–13 (MNPNNRSEHDTIK) the composition is skewed to basic and acidic residues. Residues 1 to 29 (MNPNNRSEHDTIKATENNEVSNNHAQYPL) are disordered. Polar residues predominate over residues 14–25 (ATENNEVSNNHA).

The protein belongs to the delta endotoxin family.

Promotes colloidosmotic lysis by binding to the midgut epithelial cells of Coleoptera. This is Pesticidal crystal protein Cry3Ca (cry3Ca) from Bacillus thuringiensis subsp. kurstaki.